The primary structure comprises 369 residues: Phosphoribosylformylglycinamidine cyclo-ligase (369 aa).

Residues 1–22 (MSKRDTSQPKTGQPKTSKRRNG) form a disordered region.

It belongs to the AIR synthase family.

It is found in the cytoplasm. It catalyses the reaction 2-formamido-N(1)-(5-O-phospho-beta-D-ribosyl)acetamidine + ATP = 5-amino-1-(5-phospho-beta-D-ribosyl)imidazole + ADP + phosphate + H(+). Its pathway is purine metabolism; IMP biosynthesis via de novo pathway; 5-amino-1-(5-phospho-D-ribosyl)imidazole from N(2)-formyl-N(1)-(5-phospho-D-ribosyl)glycinamide: step 2/2. This is Phosphoribosylformylglycinamidine cyclo-ligase from Mesorhizobium japonicum (strain LMG 29417 / CECT 9101 / MAFF 303099) (Mesorhizobium loti (strain MAFF 303099)).